The chain runs to 662 residues: ATP-dependent RNA helicase DDX3X (662 aa).

Ser-2 is modified (N-acetylserine). The segment at 2–139 (SHVAVENALG…KSDEDDWSKP (138 aa)) is required for TBK1 and IKBKE-dependent IFNB1 activation. Positions 12–21 (LDQQFAGLDL) match the Nuclear export signal motif. Residues 19-144 (LDLNSSDNQS…DWSKPLPPSE (126 aa)) are disordered. Over residues 21–34 (LNSSDNQSGGSTAS) the composition is skewed to polar residues. The segment at 38–44 (YIPPHLR) is interaction with EIF4E. Residues 44–68 (RNREATKGFYDKDSSGWSSSKDKDA) are compositionally biased toward basic and acidic residues. The residue at position 55 (Lys-55) is an N6-acetyllysine. Low complexity predominate over residues 70–89 (SSFGSRSDSRGKSSFFSDRG). The segment at 81–90 (KSSFFSDRGS) is interaction with VACV protein K7. Ser-82, Ser-86, and Ser-90 each carry phosphoserine. Residues 88 to 123 (RGSGSRGRFDDRGRSDYDGIGSRGDRSGFGKFERGG) form an involved in binding to RNA G-quadruplex region. The segment covering 94–130 (GRFDDRGRSDYDGIGSRGDRSGFGKFERGGNSRWCDK) has biased composition (basic and acidic residues). The segment at 100-110 (GRSDYDGIGSR) is interaction with IKBKE. The tract at residues 100–662 (GRSDYDGIGS…NSQGVDWWGN (563 aa)) is interaction with GSK3B. The residue at position 101 (Arg-101) is an Omega-N-methylarginine. Phosphoserine; by IKKE is present on Ser-102. Residue Tyr-104 is modified to Phosphotyrosine. Position 110 is an omega-N-methylarginine (Arg-110). Lys-118 carries the post-translational modification N6-acetyllysine. At Ser-131 the chain carries Phosphoserine. The interaction with CHUK stretch occupies residues 139–172 (PLPPSERLEQELFSGGNTGINFEKYDDIPVEATG). The Q motif motif lies at 180-208 (ESFSDVEMGEIIMGNIELTRYTRPTPVQK). At Ser-181 the chain carries Phosphoserine; by TBK1; in vitro. Ser-183 carries the post-translational modification Phosphoserine; by TBK1. 200–207 (YTRPTPVQ) is an ATP binding site. The Helicase ATP-binding domain maps to 211–403 (IPIIKEKRDL…RDFLDEYIFL (193 aa)). A Glycyl lysine isopeptide (Lys-Gly) (interchain with G-Cter in SUMO2) cross-link involves residue Lys-215. Residue 224–231 (AQTGSGKT) participates in ATP binding. The residue at position 240 (Ser-240) is a Phosphoserine; by TBK1; in vitro. An involved in stimulation of ATPase activity by DNA and RNA, nucleic acid binding and unwinding and HIV-1 replication region spans residues 250–259 (ALRAMKENGR). Position 269 is a phosphoserine; by TBK1; in vitro (Ser-269). The short motif at 347-350 (DEAD) is the DEAD box element. The interaction with HCV core protein stretch occupies residues 409–662 (GSTSENITQK…NSQGVDWWGN (254 aa)). The Helicase C-terminal domain maps to 414-575 (NITQKVVWVE…EVPSWLENMA (162 aa)). Ser-429 carries the post-translational modification Phosphoserine; by CSNK1E and TBK1; in vitro. Thr-438 carries the phosphothreonine; by TBK1; in vitro modification. A phosphoserine; by TBK1; in vitro mark is found at Ser-442 and Ser-456. The residue at position 469 (Thr-469) is a Phosphothreonine; by CSNK1E; in vitro. Residue Ser-470 is modified to Phosphoserine; by CSNK1E; in vitro. Ser-520 bears the Phosphoserine; by TBK1; in vitro mark. Residues 536–661 (GNLGLATSFF…YNSQGVDWWG (126 aa)) form an interaction with NXF1 region. Thr-542 carries the post-translational modification Phosphothreonine; by TBK1; in vitro. Phosphoserine; by CSNK1E and TBK1; in vitro is present on Ser-543. Arg-592 carries the omega-N-methylarginine modification. 3 positions are modified to phosphoserine: Ser-594, Ser-605, and Ser-612. The disordered stretch occupies residues 601-634 (DYRQSSGASSSSFSSSRASSSRSGGGGHGSSRGF). Over residues 604–622 (QSSGASSSSFSSSRASSSR) the composition is skewed to low complexity. 2 positions are modified to omega-N-methylarginine: Arg-617 and Arg-632. Residues 623–634 (SGGGGHGSSRGF) show a composition bias toward gly residues.

It belongs to the DEAD box helicase family. DDX3/DED1 subfamily. In terms of assembly, homodimer; can bind RNA as a monomer and as a dimer/oligomer. Interacts with TDRD3. Interacts (when phosphorylated at Ser-102) with IRF3; the interaction facilitates the phosphorylation and activation of IRF3 by IKBKE. Directly interacts with XPO1/CRM1. The interaction with XPO1/CMR1 is dependent on the DDX3X nuclear export signal motif and XPO1 interaction with GTPase RAN in its active GTP-bound form. Weakly interacts with TBKBP1/SINTBAD. Directly interacts with TRAF3; this interaction stimulates TRAF3 'Lys-63' ubiquitination. Interacts with CSNK1E in a Wnt-dependent manner; this interaction greatly enhances CSNK1E affinity for ATP, stimulates its kinase activity and promotes CSNK1E-mediated DVL2 phosphorylation. In the presence of RNA, the interaction is decreased. Also interacts with CSNK1D and stimulates its kinase activity. Interacts with TRPV4; this interaction is decreased when the TRPV4 channel is activated, leading to DDX3X relocalization to the nucleus. Interacts with MAP3K14/NIK. Directly interacts with CHUK/IKKA after physiological activation of the TLR7 and TLR8 pathways; this interaction enhances CHUK autophosphorylation. May associate with EIF4F complex, composed of at least EIF4A, EIF4E and EIF4G1/EIF4G3. Directly interacts with EIF4E in an RNA-independent manner; this interaction enhances EIF4E cap-binding ability. Directly interacts with EIF4G1 in an RNA-independent manner. DDX3X competes with EIF4G1 for interaction with EIF4E. Interacts with EIF4A1 and EIF2S1 in an RNA-independent manner. Associates with the eukaryotic translation initiation factor 3 (eIF-3) complex, including with EIF3B and EIF3C subunits. Directly interacts with IKBKE/IKKE; this interaction stimulates IKBKE activating autophosphorylation and is induced upon viral infection. Interacts with TBK1. Interacts with SP1; this interaction potentiates SP1-induced CDKN1A/WAF1/CIP1 transcription. Interacts with GSK3A and GSK3B. Interacts with several death receptors, inclusing FAS, TNFRSF10A and TNFRSF10B. Recruited to TNFRSF10B in the absence of receptor stimulation. When TNFRSF10B is stimulated, further recruited to the receptor and cleaved by caspases. A large proteolytic fragment remains associated with TNFRSF10B. Interacts (via C-terminus) with NXF1/TAP; this interaction may be partly involved in DDX3X nuclear export and in NXF1 localization to stress granules. Identified in an mRNP complex, composed of at least DHX9, DDX3X, ELAVL1, HNRNPU, IGF2BP1/2, ILF3, PABPC1, PCBP2, PTBP2, STAU1, STAU2, SYNCRIP and YBX1. The interaction with IGF2BP1/2 is RNA-dependent. Directly interacts with PABPC1/PABP1 in an RNA-independent manner. This interaction increases in stressed cells and decreases during cell recovery. Interacts (via C-terminus) with MAVS/IPS-1; this interaction occurs rapidly, but transiently after Sendai virus infection. The interaction potentiates MAVS-mediated IFNB induction. Interacts with ERCC6/CBS. Interacts with DHX33 in an RNA-independent manner. Interacts with DDX5 in the cytoplasm; this interaction may be more efficient when both proteins are unphosphorylated. Interacts with RIGI/RIG-1. Interacts with IFIH1/MDA5. Interacts with NCAPH; this interaction may be important for the NCAPH localization at condensing chromosomes during mitosis. Interacts with NLRP3 (via NACHT domain) under inflammasome-activating conditions. Interacts with CAPRIN1. Interacts with HNF4A and NR0B2/SHP in an RNA-independent manner; this interaction disrupts the interaction between HNF4 and NR0B2 that forms inactive heterodimers and enhances the formation of active HNF4 homodimers. Interacts with CREBBP/CBP. Interacts with EP300/p300. Interacts with gamma-tubulin. Interacts with phosphorylated TP53. Directly interacts with RELA/p65; this interaction may trap RELA in the cytoplasm, impairing nuclear relocalization upon TNF activating signals. (Microbial infection) Interacts with hepatitis B virus (HBV) polymerase in the cytoplasm; this interaction may inhibit DDX3X interaction with the IKBKE/TBK1 complex, and hence impair IKBKE/TBK1-mediated increase in IFNB production. As to quaternary structure, (Microbial infection) Directly interacts with hepatitis C virus (HCV) core protein in the cytoplasm. In terms of assembly, (Microbial infection) Interacts with vaccinia virus (VACV) protein K7. (Microbial infection) Interacts with HIV-1 protein Rev. As to quaternary structure, (Microbial infection) Interacts with Venezuelan equine encephalitis virus non-structural protein 3. Phosphorylated by TBK1; the phosphorylation is required for the synergistic induction of IFNB mediated by TBK1 and DDX3X. Phosphorylated by IKBKE at Ser-102 after ssRNA viral infection; enhances the induction of INFB promoter by IRF3. The cytoplasmic form is highly phosphorylated in the G1/S phase of the cell cycle and much less at G2/M. Phosphorylation by CSNK1E may inhibit RNA-stimulated ATPase activity. Post-translationally, upon stimulation of death receptors, including TNFRSF10B, recruited to receptors and cleaved by caspases. Proteolytic fragments remain associated with the receptors. This cleavage presumably inactivates DDX3X anti-apoptotic function. In terms of processing, ubiquitinated by RNF39 via 'Lys-48'-linked ubiquitination; leading to proteasomal degradation. In terms of tissue distribution, widely expressed. In testis, expressed in spermatids. Expressed in epidermis and liver (at protein level).

It localises to the cell membrane. The protein localises to the nucleus. It is found in the cytoplasm. Its subcellular location is the stress granule. The protein resides in the inflammasome. It localises to the cell projection. The protein localises to the lamellipodium. It is found in the cytoskeleton. Its subcellular location is the microtubule organizing center. The protein resides in the centrosome. The enzyme catalyses ATP + H2O = ADP + phosphate + H(+). In terms of biological role, multifunctional ATP-dependent RNA helicase. The ATPase activity can be stimulated by various ribo-and deoxynucleic acids indicative for a relaxed substrate specificity. In vitro can unwind partially double-stranded DNA with a preference for 5'-single-stranded DNA overhangs. Binds RNA G-quadruplex (rG4s) structures, including those located in the 5'-UTR of NRAS mRNA. Involved in many cellular processes, which do not necessarily require its ATPase/helicase catalytic activities. Involved in transcription regulation. Positively regulates CDKN1A/WAF1/CIP1 transcription in an SP1-dependent manner, hence inhibits cell growth. This function requires its ATPase, but not helicase activity. CDKN1A up-regulation may be cell-type specific. Binds CDH1/E-cadherin promoter and represses its transcription. Potentiates HNF4A-mediated MTTP transcriptional activation; this function requires ATPase, but not helicase activity. Facilitates HNF4A acetylation, possibly catalyzed by CREBBP/EP300, thereby increasing the DNA-binding affinity of HNF4 to its response element. In addition, disrupts the interaction between HNF4 and SHP that forms inactive heterodimers and enhances the formation of active HNF4 homodimers. By promoting HNF4A-induced MTTP expression, may play a role in lipid homeostasis. May positively regulate TP53 transcription. Associates with mRNPs, predominantly with spliced mRNAs carrying an exon junction complex (EJC). Involved in the regulation of translation initiation. Not involved in the general process of translation, but promotes efficient translation of selected complex mRNAs, containing highly structured 5'-untranslated regions (UTR). This function depends on helicase activity. Might facilitate translation by resolving secondary structures of 5'-UTRs during ribosome scanning. Alternatively, may act prior to 43S ribosomal scanning and promote 43S pre-initiation complex entry to mRNAs exhibiting specific RNA motifs, by performing local remodeling of transcript structures located close to the cap moiety. Independently of its ATPase activity, promotes the assembly of functional 80S ribosomes and disassembles from ribosomes prior to the translation elongation process. Positively regulates the translation of cyclin E1/CCNE1 mRNA and consequently promotes G1/S-phase transition during the cell cycle. May activate TP53 translation. Required for endoplasmic reticulum stress-induced ATF4 mRNA translation. Independently of its ATPase/helicase activity, enhances IRES-mediated translation; this activity requires interaction with EIF4E. Independently of its ATPase/helicase activity, has also been shown specifically repress cap-dependent translation, possibly by acting on translation initiation factor EIF4E. Involved in innate immunity, acting as a viral RNA sensor. Binds viral RNAs and promotes the production of type I interferon (IFN-alpha and IFN-beta). Potentiate MAVS/RIGI-mediated induction of IFNB in early stages of infection. Enhances IFNB1 expression via IRF3/IRF7 pathway and participates in NFKB activation in the presence of MAVS and TBK1. Involved in TBK1 and IKBKE-dependent IRF3 activation leading to IFNB induction, acts as a scaffolding adapter that links IKBKE and IRF3 and coordinates their activation. Involved in the TLR7/TLR8 signaling pathway leading to type I interferon induction, including IFNA4 production. In this context, acts as an upstream regulator of IRF7 activation by MAP3K14/NIK and CHUK/IKKA. Stimulates CHUK autophosphorylation and activation following physiological activation of the TLR7 and TLR8 pathways, leading to MAP3K14/CHUK-mediated activatory phosphorylation of IRF7. Also stimulates MAP3K14/CHUK-dependent NF-kappa-B signaling. Negatively regulates TNF-induced IL6 and IL8 expression, via the NF-kappa-B pathway. May act by interacting with RELA/p65 and trapping it in the cytoplasm. May also bind IFNB promoter; the function is independent of IRF3. Involved in both stress and inflammatory responses. Independently of its ATPase/helicase activity, required for efficient stress granule assembly through its interaction with EIF4E, hence promotes survival in stressed cells. Independently of its helicase activity, regulates NLRP3 inflammasome assembly through interaction with NLRP3 and hence promotes cell death by pyroptosis during inflammation. This function is independent of helicase activity. Therefore DDX3X availability may be used to interpret stress signals and choose between pro-survival stress granules and pyroptotic NLRP3 inflammasomes and serve as a live-or-die checkpoint in stressed cells. In association with GSK3A/B, negatively regulates extrinsic apoptotic signaling pathway via death domain receptors, including TNFRSF10B, slowing down the rate of CASP3 activation following death receptor stimulation. Cleavage by caspases may inactivate DDX3X and relieve the inhibition. Independently of its ATPase/helicase activity, allosteric activator of CSNK1E. Stimulates CSNK1E-mediated phosphorylation of DVL2, thereby involved in the positive regulation of Wnt/beta-catenin signaling pathway. Also activates CSNK1A1 and CSNK1D in vitro, but it is uncertain if these targets are physiologically relevant. ATPase and casein kinase-activating functions are mutually exclusive. May be involved in mitotic chromosome segregation. Functionally, (Microbial infection) Facilitates hepatitis C virus (HCV) replication. During infection, HCV core protein inhibits the interaction between MAVS and DDX3X and therefore impairs MAVS-dependent INFB induction and might recruit DDX3X to HCV replication complex. Its function is as follows. (Microbial infection) Facilitates HIV-1 replication. Acts as a cofactor for XPO1-mediated nuclear export of HIV-1 Rev RNAs. This function is strongly stimulated in the presence of TBK1 and requires DDX3X ATPase activity. (Microbial infection) Facilitates Zika virus (ZIKV) replication. In terms of biological role, (Microbial infection) Facilitates Dengue virus (DENV) replication. Functionally, (Microbial infection) Facilitates Venezuelan equine encephalitis virus (VEEV) replication. The sequence is that of ATP-dependent RNA helicase DDX3X (DDX3X) from Homo sapiens (Human).